The sequence spans 385 residues: Spermidine/putrescine import ATP-binding protein PotA (385 aa).

Residues Ile-6–Ile-238 form the ABC transporter domain. Residue Gly-40–Ser-47 participates in ATP binding.

The protein belongs to the ABC transporter superfamily. Spermidine/putrescine importer (TC 3.A.1.11.1) family. As to quaternary structure, the complex is composed of two ATP-binding proteins (PotA), two transmembrane proteins (PotB and PotC) and a solute-binding protein (PotD).

It localises to the cell membrane. It catalyses the reaction ATP + H2O + polyamine-[polyamine-binding protein]Side 1 = ADP + phosphate + polyamineSide 2 + [polyamine-binding protein]Side 1.. Its function is as follows. Part of the ABC transporter complex PotABCD involved in spermidine/putrescine import. Responsible for energy coupling to the transport system. The polypeptide is Spermidine/putrescine import ATP-binding protein PotA (Streptococcus sanguinis (strain SK36)).